A 1298-amino-acid chain; its full sequence is Activating molecule in BECN1-regulated autophagy protein 1 (1298 aa).

Residues M1–A22 are interaction with DDB1. K45 is covalently cross-linked (Glycyl lysine isopeptide (Lys-Gly) (interchain with G-Cter in ubiquitin)). 3 WD repeats span residues D51–S90, G93–F133, and D135–K175. S52 bears the Phosphoserine; by MTOR mark. Polar residues predominate over residues I254–A266. The disordered stretch occupies residues I254–T284. The segment covering P268 to P277 has biased composition (pro residues). The PxP motif 1 signature appears at P275–R281. S328 is subject to Phosphoserine. The disordered stretch occupies residues F343 to G413. Polar residues predominate over residues Q354 to N385. Residues S394 and S443 each carry the phosphoserine modification. Composition is skewed to polar residues over residues S458–T467, H547–S561, and N590–Q601. 4 disordered regions span residues S458–S494, I538–S561, N590–R690, and R747–M796. Composition is skewed to low complexity over residues V602 to S614 and S628 to S639. Residues S635 and S639 each carry the phosphoserine modification. Residues Y661 to A674 are compositionally biased toward polar residues. An Asymmetric dimethylarginine modification is found at R747. Residues T772–D781 show a composition bias toward acidic residues. Residue S1043 is modified to Phosphoserine; by IKKA. An LIR motif is present at residues S1043–L1052. A compositionally biased stretch (polar residues) spans H1060–T1075. Residues H1060 to D1079 form a disordered region. 2 consecutive short sequence motifs (TQT motif) follow at residues T1104–T1106 and T1116–T1118. Disordered regions lie at residues Q1112 to S1143, R1190 to L1214, and S1227 to R1298. Over residues S1191–R1212 the composition is skewed to polar residues. At S1205 the chain carries Phosphoserine. The short motif at P1206–R1212 is the PxP motif 2 element.

It belongs to the WD repeat AMBRA1 family. As to quaternary structure, component of the DCX(AMBRA1) E3 ubiquitin ligase complex, also named CRL4(AMBRA1), at least composed of CUL4 (CUL4A or CUL4B), DDB1, AMBRA1 and RBX1. Interacts with BECN1. Probably forms a complex with BECN1 and PIK3C3. Interacts with BECN2. Interacts with BCL2; leading to prevent interaction with BCN1 and autophagy, interaction is disrupted upon autophagy induction. Interacts with ULK1. Interacts (via PxP motifs) with PPP2CA; enhancing interaction between PPP2CA and MYC or FOXO3. Forms a complex with PPP2CA and BECN1; AMBRA1 and BECN1 components of the complex regulate MYC stability via different pathways. Interacts (TQT motifs) with DYNLL1 and DYNLL2; tethering AMBRA1 and the BECN1-PIK3C3 complex in absence of autophagy. Interacts with TRAF6; interaction is required to mediate 'Lys-63'-linked ubiquitination of ULK1. Interacts with TRIM32; promoting activation of ULK1 by TRIM32 via unanchored 'Lys-63'-linked polyubiquitin chains. Interacts with PRKN. Interacts (via LIR motif) with LC3 (MAP1LC3A, MAP1LC3B or MAP1LC3C). Interacts with HUWE1. Interacts with PTK2/FAK. Interacts with SRC; required for SRC trafficking to autophagosomes. Post-translationally, phosphorylation at Ser-52 by MTOR inhibits its ability to regulate autophagy and mediate ubiquitination of ULK1. Phosphorylation by ULK1 in response to autophagy induction abolishes interaction with DYNLL1 and DYNLL2, releasing AMBRA1 from the cytoskeletal docking site to induce autophagosome nucleation. Phosphorylation by MTOR inhibits interaction with PPP2CA and subsequent dephosphorylation of MYC. Phosphorylation at Ser-1043 by CHUK/IKKA promotes its interaction with ATG8 family proteins GABARAP and MAP1LC3B and its mitophagic activity. In terms of processing, ubiquitinated by RNF2 via 'Lys-48'-linkage in unstressed cells, leading to its degradation by the proteasome. Induction of autophagy promotes stabilization via interaction with CUL4 (CUL4A or CUL4B) and DDB1. Upon prolonged starvation, ubiquitinated and degraded, terminating the autophagy response. Undergoes proteolytic processing by caspase-6 (CASP6), caspase-7 (CASP7) and caspase-8 (CASP8) during apoptosis, resulting in the dismantling of the autophagic machinery and the accomplishment of the programmed cell death program. Also cleaved by calpains during apoptosis, which mediate a complete proteolytic degradation.

The protein resides in the endoplasmic reticulum. It is found in the cytoplasm. Its subcellular location is the cytoskeleton. The protein localises to the cytoplasmic vesicle. It localises to the autophagosome. The protein resides in the mitochondrion. It is found in the cytosol. Its subcellular location is the nucleus. The protein localises to the cell junction. It localises to the focal adhesion. It participates in protein modification; protein ubiquitination. Substrate-recognition component of a DCX (DDB1-CUL4-X-box) E3 ubiquitin-protein ligase complex involved in cell cycle control and autophagy. The DCX(AMBRA1) complex specifically mediates the polyubiquitination of target proteins such as BECN1, CCND1, CCND2, CCND3, ELOC and ULK1. Acts as an upstream master regulator of the transition from G1 to S cell phase: AMBRA1 specifically recognizes and binds phosphorylated cyclin-D (CCND1, CCND2 and CCND3), leading to cyclin-D ubiquitination by the DCX(AMBRA1) complex and subsequent degradation. By controlling the transition from G1 to S phase and cyclin-D degradation, AMBRA1 acts as a tumor suppressor that promotes genomic integrity during DNA replication and counteracts developmental abnormalities and tumor growth. AMBRA1 also regulates the cell cycle by promoting MYC dephosphorylation and degradation independently of the DCX(AMBRA1) complex: acts via interaction with the catalytic subunit of protein phosphatase 2A (PPP2CA), which enhances interaction between PPP2CA and MYC, leading to MYC dephosphorylation and degradation. Acts as a regulator of Cul5-RING (CRL5) E3 ubiquitin-protein ligase complexes by mediating ubiquitination and degradation of Elongin-C (ELOC) component of CRL5 complexes. Acts as a key regulator of autophagy by modulating the BECN1-PIK3C3 complex: controls protein turnover during neuronal development, and regulates normal cell survival and proliferation. In normal conditions, AMBRA1 is tethered to the cytoskeleton via interaction with dyneins DYNLL1 and DYNLL2. Upon autophagy induction, AMBRA1 is released from the cytoskeletal docking site to induce autophagosome nucleation by mediating ubiquitination of proteins involved in autophagy. The DCX(AMBRA1) complex mediates 'Lys-63'-linked ubiquitination of BECN1, increasing the association between BECN1 and PIK3C3 to promote PIK3C3 activity. In collaboration with TRAF6, AMBRA1 mediates 'Lys-63'-linked ubiquitination of ULK1 following autophagy induction, promoting ULK1 stability and kinase activity. Also activates ULK1 via interaction with TRIM32: TRIM32 stimulates ULK1 through unanchored 'Lys-63'-linked polyubiquitin chains. Also acts as an activator of mitophagy via interaction with PRKN and LC3 proteins (MAP1LC3A, MAP1LC3B or MAP1LC3C); possibly by bringing damaged mitochondria onto autophagosomes. Also activates mitophagy by acting as a cofactor for HUWE1; acts by promoting HUWE1-mediated ubiquitination of MFN2. AMBRA1 is also involved in regulatory T-cells (Treg) differentiation by promoting FOXO3 dephosphorylation independently of the DCX(AMBRA1) complex: acts via interaction with PPP2CA, which enhances interaction between PPP2CA and FOXO3, leading to FOXO3 dephosphorylation and stabilization. May act as a regulator of intracellular trafficking, regulating the localization of active PTK2/FAK and SRC. Also involved in transcription regulation by acting as a scaffold for protein complexes at chromatin. The polypeptide is Activating molecule in BECN1-regulated autophagy protein 1 (Homo sapiens (Human)).